Reading from the N-terminus, the 108-residue chain is Parvalbumin beta (108 aa).

Alanine 1 is subject to N-acetylalanine. EF-hand domains are found at residues 38 to 73 (KSNEELEAIFKILDQDKSGFIEDEELELFLQNFSAG) and 77 to 108 (LTKTETETFLKAGDSDGDGKIGVDEFQKLVKA). Ca(2+)-binding residues include aspartate 51, aspartate 53, serine 55, phenylalanine 57, glutamate 59, glutamate 62, aspartate 90, aspartate 92, aspartate 94, lysine 96, and glutamate 101.

Belongs to the parvalbumin family.

In muscle, parvalbumin is thought to be involved in relaxation after contraction. It binds two calcium ions. The protein is Parvalbumin beta of Latimeria chalumnae (Coelacanth).